The following is a 233-amino-acid chain: ATP-dependent Clp protease proteolytic subunit 1 (233 aa).

Ser-136 serves as the catalytic Nucleophile. His-161 is a catalytic residue.

It belongs to the peptidase S14 family. Fourteen ClpP subunits assemble into 2 heptameric rings which stack back to back to give a disk-like structure with a central cavity, resembling the structure of eukaryotic proteasomes.

The protein resides in the cytoplasm. It catalyses the reaction Hydrolysis of proteins to small peptides in the presence of ATP and magnesium. alpha-casein is the usual test substrate. In the absence of ATP, only oligopeptides shorter than five residues are hydrolyzed (such as succinyl-Leu-Tyr-|-NHMec, and Leu-Tyr-Leu-|-Tyr-Trp, in which cleavage of the -Tyr-|-Leu- and -Tyr-|-Trp bonds also occurs).. Its function is as follows. Cleaves peptides in various proteins in a process that requires ATP hydrolysis. Has a chymotrypsin-like activity. Plays a major role in the degradation of misfolded proteins. This chain is ATP-dependent Clp protease proteolytic subunit 1, found in Bifidobacterium longum (strain NCC 2705).